The sequence spans 502 residues: Probable cytosol aminopeptidase (502 aa).

Positions 269 and 274 each coordinate Mn(2+). Lys-281 is an active-site residue. Residues Asp-292, Asp-351, and Glu-353 each contribute to the Mn(2+) site. Residue Arg-355 is part of the active site.

This sequence belongs to the peptidase M17 family. Requires Mn(2+) as cofactor.

Its subcellular location is the cytoplasm. It carries out the reaction Release of an N-terminal amino acid, Xaa-|-Yaa-, in which Xaa is preferably Leu, but may be other amino acids including Pro although not Arg or Lys, and Yaa may be Pro. Amino acid amides and methyl esters are also readily hydrolyzed, but rates on arylamides are exceedingly low.. The enzyme catalyses Release of an N-terminal amino acid, preferentially leucine, but not glutamic or aspartic acids.. Functionally, presumably involved in the processing and regular turnover of intracellular proteins. Catalyzes the removal of unsubstituted N-terminal amino acids from various peptides. The protein is Probable cytosol aminopeptidase of Shewanella piezotolerans (strain WP3 / JCM 13877).